A 325-amino-acid polypeptide reads, in one-letter code: ATP phosphoribosyltransferase (325 aa).

This sequence belongs to the ATP phosphoribosyltransferase family. Long subfamily. The cofactor is Mg(2+).

Its subcellular location is the cytoplasm. The catalysed reaction is 1-(5-phospho-beta-D-ribosyl)-ATP + diphosphate = 5-phospho-alpha-D-ribose 1-diphosphate + ATP. Its pathway is amino-acid biosynthesis; L-histidine biosynthesis; L-histidine from 5-phospho-alpha-D-ribose 1-diphosphate: step 1/9. With respect to regulation, feedback inhibited by histidine. In terms of biological role, catalyzes the condensation of ATP and 5-phosphoribose 1-diphosphate to form N'-(5'-phosphoribosyl)-ATP (PR-ATP). Has a crucial role in the pathway because the rate of histidine biosynthesis seems to be controlled primarily by regulation of HisG enzymatic activity. This Rhodopseudomonas palustris (strain HaA2) protein is ATP phosphoribosyltransferase.